We begin with the raw amino-acid sequence, 241 residues long: Purine nucleoside phosphorylase DeoD-type (241 aa).

Residue H5 participates in a purine D-ribonucleoside binding. Residues G21, R25, R44, and 88–91 each bind phosphate; that span reads RVGS. A purine D-ribonucleoside is bound by residues 180 to 182 and 204 to 205; these read EME and SD. D205 functions as the Proton donor in the catalytic mechanism.

The protein belongs to the PNP/UDP phosphorylase family. Homohexamer; trimer of homodimers.

The catalysed reaction is a purine D-ribonucleoside + phosphate = a purine nucleobase + alpha-D-ribose 1-phosphate. The enzyme catalyses a purine 2'-deoxy-D-ribonucleoside + phosphate = a purine nucleobase + 2-deoxy-alpha-D-ribose 1-phosphate. Functionally, catalyzes the reversible phosphorolytic breakdown of the N-glycosidic bond in the beta-(deoxy)ribonucleoside molecules, with the formation of the corresponding free purine bases and pentose-1-phosphate. This Yersinia enterocolitica serotype O:8 / biotype 1B (strain NCTC 13174 / 8081) protein is Purine nucleoside phosphorylase DeoD-type.